The primary structure comprises 358 residues: MDGFSGGIDINIFDGNSTENGSGDFEDFIEPCFMQENSDFNRIFLPTIYSFIFLLGIIGNGLVVVVMGYQKKSRTMTDKYRLHLSVADLLFVFTLPFWSVDAAIGWYFKEFLCKAVHVIYTVNLYSSVLILAFISLDRYLAIVHATNSQGSRKMLADKVVYAGVWLPALLLTVPDLVFASVSNENGQFVCDRIYPIDNRETWTVGFRFLHITVGLILPGLIILVCYCVIISKLSHSKGHQKRKALKTTVILILAFFACWLPYYVCLTTDTFMMLGLVKADCIWENTLHKAISITEALAFFHCCLNPILYAFLGAKFKKSAQNAFTSVSRGSSLKILSKKRAGLSSVSTESESSSFHSS.

Positions 1–25 are important for chemokine binding and signaling; the sequence is MDGFSGGIDINIFDGNSTENGSGDF. Over 1-44 the chain is Extracellular; that stretch reads MDGFSGGIDINIFDGNSTENGSGDFEDFIEPCFMQENSDFNRIF. N-linked (GlcNAc...) asparagine glycosylation is found at Asn-16 and Asn-20. 2 disulfide bridges follow: Cys-32/Cys-281 and Cys-113/Cys-190. Residues 45–67 form a helical membrane-spanning segment; it reads LPTIYSFIFLLGIIGNGLVVVVM. Topologically, residues 68 to 81 are cytoplasmic; sequence GYQKKSRTMTDKYR. The chain crosses the membrane as a helical span at residues 82-103; it reads LHLSVADLLFVFTLPFWSVDAA. The chemokine binding stretch occupies residues 98–101; sequence WSVD. At 104 to 114 the chain is on the extracellular side; that stretch reads IGWYFKEFLCK. Residues 115–134 traverse the membrane as a helical segment; the sequence is AVHVIYTVNLYSSVLILAFI. Positions 117-121 are chemokine binding; sequence HVIYT. At 135–158 the chain is on the cytoplasmic side; that stretch reads SLDRYLAIVHATNSQGSRKMLADK. Residues 139-151 form an involved in dimerization; when bound to chemokine region; sequence YLAIVHATNSQGS. A helical transmembrane segment spans residues 159–178; it reads VVYAGVWLPALLLTVPDLVF. Topologically, residues 179–202 are extracellular; the sequence is ASVSNENGQFVCDRIYPIDNRETW. Residues 190 to 194 are chemokine binding, important for signaling; it reads CDRIY. The helical transmembrane segment at 203–223 threads the bilayer; the sequence is TVGFRFLHITVGLILPGLIIL. Over 224–248 the chain is Cytoplasmic; the sequence is VCYCVIISKLSHSKGHQKRKALKTT. A helical transmembrane segment spans residues 249 to 268; sequence VILILAFFACWLPYYVCLTT. Over 269-289 the chain is Extracellular; it reads DTFMMLGLVKADCIWENTLHK. The helical transmembrane segment at 290-309 threads the bilayer; that stretch reads AISITEALAFFHCCLNPILY. Over 310–358 the chain is Cytoplasmic; that stretch reads AFLGAKFKKSAQNAFTSVSRGSSLKILSKKRAGLSSVSTESESSSFHSS. Residues 338-358 form a disordered region; it reads KKRAGLSSVSTESESSSFHSS. A compositionally biased stretch (low complexity) spans 344-358; that stretch reads SSVSTESESSSFHSS.

Belongs to the G-protein coupled receptor 1 family. As to quaternary structure, monomer. Can form dimers. In terms of processing, sulfation is required for efficient binding of cxcl12/sdf-1alpha and promotes its dimerization. Post-translationally, O- and N-glycosylated.

It is found in the cell membrane. Its subcellular location is the cytoplasm. The protein resides in the nucleus. It localises to the early endosome. The protein localises to the late endosome. It is found in the lysosome. In terms of biological role, receptor for the C-X-C chemokine cxcl12/sdf-1. Transduces a signal by increasing the intracellular level of calcium ions. Signaling with cxcl12/sdf-1 mediates the directional movement of mesodermal cells during gastrulation. May play a role in the migration of embryonic presumptive primordial germ cells (pPGCs). May also be involved in regulating migration of hematopoietic stem cells into the larval liver. In Xenopus laevis (African clawed frog), this protein is C-X-C chemokine receptor type 4-B (cxcr4-b).